Here is a 553-residue protein sequence, read N- to C-terminus: Cytokine-like nuclear factor N-PAC (553 aa).

Residues 8–66 form the PWWP domain; it reads LGDLVWGKLGRYPPWPGKIVNPPKDLKKPRGKKCFFVKFFGTEDHAWIKVEQLKPYHLH. 2 stretches are compositionally biased toward basic and acidic residues: residues 92–145 and 162–182; these read KTKG…EGKK and RAQD…KDLT. Residues 92–188 form a disordered region; it reads KTKGKDQASS…KDLTIPESST (97 aa). Residues 168 to 180 constitute a DNA-binding region (a.T hook); it reads PRKRGRPPKDEKD. The interaction with histone H3 stretch occupies residues 214 to 217; that stretch reads DPHF. The tract at residues 261–553 is dehydrogenase domain; sequence GSITPTDKKI…MSAVYRAYIH (293 aa). NAD(+)-binding positions include 271–285, Thr-362, and Lys-505; that span reads GFLG…IVSN.

This sequence belongs to the HIBADH-related family. NP60 subfamily. As to quaternary structure, homotetramere. Binds to mononucleosomes.

Its subcellular location is the nucleus. The protein resides in the chromosome. Its function is as follows. Cytokine-like nuclear factor with chromatin gene reader activity involved in chromatin modification and regulation of gene expression. Acts as a nucleosome-destabilizing factor that is recruited to genes during transcriptional activation. Recognizes and binds histone H3 without a preference for specific epigenetic markers and also binds DNA. Interacts with KDM1B and promotes its histone demethylase activity by facilitating the capture of H3 tails, they form a multifunctional enzyme complex that modifies transcribed chromatin and facilitates Pol II transcription through nucleosomes. The sequence is that of Cytokine-like nuclear factor N-PAC (GLYR1) from Gallus gallus (Chicken).